The following is a 141-amino-acid chain: Lutropin subunit beta (141 aa).

The first 20 residues, 1–20 (MEMLQGLLLLMLLSMGGTWA), serve as a signal peptide directing secretion. 6 disulfide bridges follow: C29/C77, C43/C92, C46/C130, C54/C108, C58/C110, and C113/C120. N-linked (GlcNAc...) asparagine glycosylation is found at N33 and N50.

It belongs to the glycoprotein hormones subunit beta family. In terms of assembly, heterodimer of a common alpha chain and a unique beta chain which confers biological specificity to thyrotropin, lutropin, follitropin and gonadotropin.

The protein resides in the secreted. Functionally, promotes spermatogenesis and ovulation by stimulating the testes and ovaries to synthesize steroids. This is Lutropin subunit beta (LHB) from Pongo pygmaeus (Bornean orangutan).